A 250-amino-acid chain; its full sequence is Solute carrier family 66 member 2 (250 aa).

In terms of domain architecture, PQ-loop 1 spans 14–80 (RMLVSWGASC…HHFESPLLWQ (67 aa)). Transmembrane regions (helical) follow at residues 15–35 (MLVS…PYIP), 49–69 (FSIY…LFWF), 72–92 (HFES…LLML), 118–138 (FFWH…FTGV), 151–173 (LFVE…PQLY), and 212–232 (FSIC…QVYL). In terms of domain architecture, PQ-loop 2 spans 149–215 (SPLFVEILGF…NQAPFQFSIC (67 aa)).

It localises to the membrane. The sequence is that of Solute carrier family 66 member 2 (slc66a2) from Xenopus laevis (African clawed frog).